The primary structure comprises 239 residues: Ribosome assembly factor mrt4 (239 aa).

This sequence belongs to the universal ribosomal protein uL10 family. Associates with the pre-60S ribosomal particle.

It localises to the nucleus. Its subcellular location is the nucleolus. It is found in the cytoplasm. Component of the ribosome assembly machinery. Nuclear paralog of the ribosomal protein P0, it binds pre-60S subunits at an early stage of assembly in the nucleolus, and is replaced by P0 in cytoplasmic pre-60S subunits and mature 80S ribosomes. In Candida glabrata (strain ATCC 2001 / BCRC 20586 / JCM 3761 / NBRC 0622 / NRRL Y-65 / CBS 138) (Yeast), this protein is Ribosome assembly factor mrt4.